The chain runs to 247 residues: ATP synthase subunit a, chloroplastic (247 aa).

The next 5 membrane-spanning stretches (helical) occupy residues Gln-38 to Val-58, Val-95 to Leu-115, Ile-134 to Thr-154, Leu-199 to Leu-219, and Gly-220 to Gly-240.

Belongs to the ATPase A chain family. In terms of assembly, F-type ATPases have 2 components, CF(1) - the catalytic core - and CF(0) - the membrane proton channel. CF(1) has five subunits: alpha(3), beta(3), gamma(1), delta(1), epsilon(1). CF(0) has four main subunits: a, b, b' and c.

The protein resides in the plastid. It localises to the chloroplast thylakoid membrane. In terms of biological role, key component of the proton channel; it plays a direct role in the translocation of protons across the membrane. The sequence is that of ATP synthase subunit a, chloroplastic from Liriodendron tulipifera (Tuliptree).